A 277-amino-acid chain; its full sequence is Kallikrein-13 (277 aa).

A signal peptide spans 1-16; that stretch reads MWPLALVIASLTLALS. N-linked (GlcNAc...) asparagine glycosylation is present at asparagine 30. Residues 36–263 form the Peptidase S1 domain; it reads LPGGYTCFPH…YVLWIRETIR (228 aa). Disulfide bonds link cysteine 42-cysteine 178, cysteine 61-cysteine 77, cysteine 157-cysteine 224, cysteine 189-cysteine 203, and cysteine 214-cysteine 239. Active-site charge relay system residues include histidine 76 and aspartate 124. Catalysis depends on serine 218, which acts as the Charge relay system. An N-linked (GlcNAc...) asparagine glycan is attached at asparagine 225.

Belongs to the peptidase S1 family. Kallikrein subfamily. Expressed in prostate, breast, testis and salivary gland.

Its subcellular location is the secreted. The chain is Kallikrein-13 (KLK13) from Homo sapiens (Human).